Reading from the N-terminus, the 233-residue chain is Low affinity immunoglobulin gamma Fc region receptor III-B (233 aa).

An N-terminal signal peptide occupies residues M1 to A16. Ig-like C2-type domains follow at residues K40–L96 and E121–K179. An intrachain disulfide couples C47 to C89. N-linked (GlcNAc...) asparagine glycans are attached at residues N56, N63, N82, and N92. C128 and C172 form a disulfide bridge. N-linked (GlcNAc...) asparagine glycosylation is found at N180 and N187. S200 carries the GPI-anchor amidated serine lipid modification. Positions S201–I233 are cleaved as a propeptide — removed in mature form.

Monomer. Interacts with INPP5D/SHIP1. Post-translationally, glycosylated. Glycosylation plays an inhibitory role in the interaction with IgG3. In terms of processing, the soluble form is produced by a proteolytic cleavage. In terms of tissue distribution, expressed specifically by polymorphonuclear leukocytes (neutrophils). Also expressed by stimulated eosinophils.

It is found in the cell membrane. It localises to the secreted. In terms of biological role, receptor for the Fc region of immunoglobulins gamma. Low affinity receptor. Binds complexed or aggregated IgG and also monomeric IgG. Contrary to III-A, is not capable to mediate antibody-dependent cytotoxicity and phagocytosis. May serve as a trap for immune complexes in the peripheral circulation which does not activate neutrophils. This is Low affinity immunoglobulin gamma Fc region receptor III-B (FCGR3B) from Homo sapiens (Human).